We begin with the raw amino-acid sequence, 563 residues long: Eukaryotic translation initiation factor 3 subunit D-1 (563 aa).

A disordered region spans residues 98-136; it reads VQKPPHQRGRFRNMRGRGGRGRNPRGGLNNHHHHGMTTL. Over residues 100–120 the composition is skewed to basic residues; the sequence is KPPHQRGRFRNMRGRGGRGRN. Positions 291–305 are RNA gate; the sequence is EFDLLTVNESSVEPP.

The protein belongs to the eIF-3 subunit D family. In terms of assembly, component of the eukaryotic translation initiation factor 3 (eIF-3) complex. The eIF-3 complex interacts with pix.

The protein resides in the cytoplasm. Functionally, mRNA cap-binding component of the eukaryotic translation initiation factor 3 (eIF-3) complex, which is involved in protein synthesis of a specialized repertoire of mRNAs and, together with other initiation factors, stimulates binding of mRNA and methionyl-tRNAi to the 40S ribosome. The eIF-3 complex specifically targets and initiates translation of a subset of mRNAs involved in cell proliferation. In the eIF-3 complex, eif3d specifically recognizes and binds the 7-methylguanosine cap of a subset of mRNAs. In Drosophila pseudoobscura pseudoobscura (Fruit fly), this protein is Eukaryotic translation initiation factor 3 subunit D-1.